The chain runs to 931 residues: Ribosome-releasing factor 2, mitochondrial (931 aa).

Positions 63-379 constitute a tr-type G domain; it reads EKTRNIGIIA…AVNNLLPGPS (317 aa). GTP contacts are provided by residues 72–79, 162–166, and 216–219; these read AHIDAGKT, DTPGH, and NKLD.

The protein belongs to the TRAFAC class translation factor GTPase superfamily. Classic translation factor GTPase family. EF-G/EF-2 subfamily.

It localises to the mitochondrion. Mitochondrial GTPase that mediates the disassembly of ribosomes from messenger RNA at the termination of mitochondrial protein biosynthesis. Not involved in the GTP-dependent ribosomal translocation step during translation elongation. The polypeptide is Ribosome-releasing factor 2, mitochondrial (mef2) (Talaromyces stipitatus (strain ATCC 10500 / CBS 375.48 / QM 6759 / NRRL 1006) (Penicillium stipitatum)).